The sequence spans 401 residues: Argininosuccinate synthase (401 aa).

ATP is bound by residues 9 to 17 (AFSGGLDTS) and A35. L-citrulline contacts are provided by Y88 and S93. Residue G117 coordinates ATP. L-aspartate contacts are provided by T119, N123, and D124. N123 serves as a coordination point for L-citrulline. R127 and Y273 together coordinate L-citrulline.

The protein belongs to the argininosuccinate synthase family. Type 1 subfamily. In terms of assembly, homotetramer.

It localises to the cytoplasm. The enzyme catalyses L-citrulline + L-aspartate + ATP = 2-(N(omega)-L-arginino)succinate + AMP + diphosphate + H(+). The protein operates within amino-acid biosynthesis; L-arginine biosynthesis; L-arginine from L-ornithine and carbamoyl phosphate: step 2/3. The chain is Argininosuccinate synthase from Xylella fastidiosa (strain Temecula1 / ATCC 700964).